Reading from the N-terminus, the 352-residue chain is Glycerol-1-phosphate dehydrogenase [NAD(P)+] (352 aa).

Residues 98–102 (GKAID) and 120–123 (TAAS) contribute to the NAD(+) site. Residue aspartate 125 coordinates substrate. Residue serine 129 coordinates NAD(+). A substrate-binding site is contributed by aspartate 172. Zn(2+) contacts are provided by aspartate 172 and histidine 252. Histidine 256 contacts substrate. Residue histidine 268 coordinates Zn(2+).

The protein belongs to the glycerol-1-phosphate dehydrogenase family. The cofactor is Zn(2+).

It is found in the cytoplasm. The enzyme catalyses sn-glycerol 1-phosphate + NAD(+) = dihydroxyacetone phosphate + NADH + H(+). It carries out the reaction sn-glycerol 1-phosphate + NADP(+) = dihydroxyacetone phosphate + NADPH + H(+). Its pathway is membrane lipid metabolism; glycerophospholipid metabolism. Its function is as follows. Catalyzes the NAD(P)H-dependent reduction of dihydroxyacetonephosphate (DHAP or glycerone phosphate) to glycerol 1-phosphate (G1P). The G1P thus generated is used as the glycerophosphate backbone of phospholipids in the cellular membranes of Archaea. In Haloarcula marismortui (strain ATCC 43049 / DSM 3752 / JCM 8966 / VKM B-1809) (Halobacterium marismortui), this protein is Glycerol-1-phosphate dehydrogenase [NAD(P)+].